The sequence spans 158 residues: Retinoic acid receptor beta (158 aa).

Residues 1–18 (RHSAQSIETQSTSSEELV) are compositionally biased toward low complexity. Residues 1-24 (RHSAQSIETQSTSSEELVPSPPSP) are disordered. Residues 31-106 (YKPCFVCQDK…VGMSKESVRN (76 aa)) constitute a DNA-binding region (nuclear receptor). NR C4-type zinc fingers lie at residues 34–54 (CFVCQDKSSGYHYGVSACEGC) and 70–94 (CHRDKNCVINKVTRNRCQYCRLQRC). The 30-residue stretch at 129–158 (ELDDLTEKIRKAHQETFPSLCQLGKYTTNS) folds into the NR LBD domain.

Belongs to the nuclear hormone receptor family. NR1 subfamily. Heterodimer; with a RXR molecule. Binds DNA preferentially as a RAR/RXR heterodimer.

The protein resides in the nucleus. In terms of biological role, receptor for retinoic acid. Retinoic acid receptors bind as heterodimers to their target response elements in response to their ligands, all-trans or 9-cis retinoic acid, and regulate gene expression in various biological processes. The RAR/RXR heterodimers bind to the retinoic acid response elements (RARE) composed of tandem 5'-AGGTCA-3' sites known as DR1-DR5. This chain is Retinoic acid receptor beta (RARB), found in Notophthalmus viridescens (Eastern newt).